The sequence spans 59 residues: Potassium channel toxin alpha-KTx 16.7 (59 aa).

The N-terminal stretch at 1-22 (MKILSILLIALVICSISICTEA) is a signal peptide. Disulfide bonds link Cys-30-Cys-51, Cys-36-Cys-56, and Cys-40-Cys-58.

It belongs to the short scorpion toxin superfamily. Potassium channel inhibitor family. Alpha-KTx 16 subfamily. In terms of tissue distribution, expressed by the venom gland.

It localises to the secreted. Functionally, may play a role in blocking voltage-gated potassium channels Kv1.2/KCNA2, and Kv1.3/KCNA3. Blocks the voltage-gated potassium channel Kv1.3/KCNA3, with an IC(50) of 118.3 +-55.8 nM. This Mesobuthus gibbosus (Mediterranean checkered scorpion) protein is Potassium channel toxin alpha-KTx 16.7.